The chain runs to 607 residues: Phosphomethylpyrimidine synthase (607 aa).

Substrate contacts are provided by residues Asn-216, Met-245, Tyr-274, His-310, 330–332 (SRG), 371–374 (DGLR), and Glu-410. Residue His-414 coordinates Zn(2+). Tyr-437 is a binding site for substrate. A Zn(2+)-binding site is contributed by His-478. Cys-558, Cys-561, and Cys-566 together coordinate [4Fe-4S] cluster.

The protein belongs to the ThiC family. In terms of assembly, homodimer. [4Fe-4S] cluster is required as a cofactor.

The enzyme catalyses 5-amino-1-(5-phospho-beta-D-ribosyl)imidazole + S-adenosyl-L-methionine = 4-amino-2-methyl-5-(phosphooxymethyl)pyrimidine + CO + 5'-deoxyadenosine + formate + L-methionine + 3 H(+). It participates in cofactor biosynthesis; thiamine diphosphate biosynthesis. Functionally, catalyzes the synthesis of the hydroxymethylpyrimidine phosphate (HMP-P) moiety of thiamine from aminoimidazole ribotide (AIR) in a radical S-adenosyl-L-methionine (SAM)-dependent reaction. The chain is Phosphomethylpyrimidine synthase from Agrobacterium fabrum (strain C58 / ATCC 33970) (Agrobacterium tumefaciens (strain C58)).